The primary structure comprises 155 residues: Ribosome maturation factor RimP (155 aa).

This sequence belongs to the RimP family.

Its subcellular location is the cytoplasm. Required for maturation of 30S ribosomal subunits. In Agathobacter rectalis (strain ATCC 33656 / DSM 3377 / JCM 17463 / KCTC 5835 / VPI 0990) (Eubacterium rectale), this protein is Ribosome maturation factor RimP.